The sequence spans 269 residues: Formamidopyrimidine-DNA glycosylase (269 aa).

The active-site Schiff-base intermediate with DNA is P2. Catalysis depends on E3, which acts as the Proton donor. K57 functions as the Proton donor; for beta-elimination activity in the catalytic mechanism. DNA contacts are provided by H90, R109, and K150. An FPG-type zinc finger spans residues 235 to 269 (RVYGRNGEPCRTCGTPIETAKHGQRSTFFCRRCQK). R259 functions as the Proton donor; for delta-elimination activity in the catalytic mechanism.

Belongs to the FPG family. As to quaternary structure, monomer. Requires Zn(2+) as cofactor.

The enzyme catalyses Hydrolysis of DNA containing ring-opened 7-methylguanine residues, releasing 2,6-diamino-4-hydroxy-5-(N-methyl)formamidopyrimidine.. The catalysed reaction is 2'-deoxyribonucleotide-(2'-deoxyribose 5'-phosphate)-2'-deoxyribonucleotide-DNA = a 3'-end 2'-deoxyribonucleotide-(2,3-dehydro-2,3-deoxyribose 5'-phosphate)-DNA + a 5'-end 5'-phospho-2'-deoxyribonucleoside-DNA + H(+). Involved in base excision repair of DNA damaged by oxidation or by mutagenic agents. Acts as a DNA glycosylase that recognizes and removes damaged bases. Has a preference for oxidized purines, such as 7,8-dihydro-8-oxoguanine (8-oxoG). Has AP (apurinic/apyrimidinic) lyase activity and introduces nicks in the DNA strand. Cleaves the DNA backbone by beta-delta elimination to generate a single-strand break at the site of the removed base with both 3'- and 5'-phosphates. In Pectobacterium carotovorum subsp. carotovorum (strain PC1), this protein is Formamidopyrimidine-DNA glycosylase.